A 431-amino-acid chain; its full sequence is Histidinol dehydrogenase (431 aa).

The NAD(+) site is built by tyrosine 127, glutamine 190, and asparagine 213. Substrate contacts are provided by serine 238, glutamine 260, and histidine 263. Zn(2+) is bound by residues glutamine 260 and histidine 263. Catalysis depends on proton acceptor residues glutamate 329 and histidine 330. Substrate contacts are provided by histidine 330, aspartate 363, glutamate 417, and histidine 422. Aspartate 363 contributes to the Zn(2+) binding site. Histidine 422 provides a ligand contact to Zn(2+).

It belongs to the histidinol dehydrogenase family. Requires Zn(2+) as cofactor.

It catalyses the reaction L-histidinol + 2 NAD(+) + H2O = L-histidine + 2 NADH + 3 H(+). The protein operates within amino-acid biosynthesis; L-histidine biosynthesis; L-histidine from 5-phospho-alpha-D-ribose 1-diphosphate: step 9/9. Its function is as follows. Catalyzes the sequential NAD-dependent oxidations of L-histidinol to L-histidinaldehyde and then to L-histidine. In Methanopyrus kandleri (strain AV19 / DSM 6324 / JCM 9639 / NBRC 100938), this protein is Histidinol dehydrogenase.